Reading from the N-terminus, the 731-residue chain is RNA-binding protein RMD9-like, mitochondrial (731 aa).

Residues 1 to 10 show a composition bias toward polar residues; that stretch reads MIRLAQQTQV. Disordered stretches follow at residues 1-29, 77-133, and 590-630; these read MIRLAQQTQVLKGKPPNQFVPHPTKNSLT, GGNI…GNSI, and QNDR…FNNP. Residues 83 to 100 are compositionally biased toward low complexity; it reads NNNNHLAQNNSNNSNNHH. Residues 101-122 show a composition bias toward basic residues; sequence NNNRNHHHNNNRNHHQNNHNHS. Phosphoserine is present on Ser-132. Residues 598 to 617 show a composition bias toward polar residues; it reads SNMNSTQISRTATPSPSLTP.

Belongs to the RMD9 family. In terms of assembly, monomer. Post-translationally, phosphorylated. Phosphorylation promotes binding to RNA.

It is found in the mitochondrion inner membrane. In terms of biological role, may be involved in the processing or stability of mitochondrial mRNAs. The chain is RNA-binding protein RMD9-like, mitochondrial from Saccharomyces cerevisiae (strain ATCC 204508 / S288c) (Baker's yeast).